The chain runs to 341 residues: UPF0283 membrane protein VV2076 (341 aa).

4 helical membrane passes run Leu-64–Val-84, Trp-93–Met-113, Glu-207–Trp-227, and Leu-255–Asp-275.

This sequence belongs to the UPF0283 family.

Its subcellular location is the cell inner membrane. The chain is UPF0283 membrane protein VV2076 from Vibrio vulnificus (strain YJ016).